The sequence spans 225 residues: Doublesex- and mab-3-related transcription factor C1 (225 aa).

A compositionally biased stretch (basic and acidic residues) spans 1-12 (MQRPSGSREVRK). 2 disordered regions span residues 1–49 (MQRP…SHVH) and 179–216 (QTRH…LPSG). Basic residues predominate over residues 27–37 (RVKKHVVRRQK).

The protein belongs to the DMRT family.

In Rattus norvegicus (Rat), this protein is Doublesex- and mab-3-related transcription factor C1 (Dmrtc1).